The following is a 189-amino-acid chain: Peptidyl-tRNA hydrolase (189 aa).

Tyr-15 is a binding site for tRNA. Residue His-20 is the Proton acceptor of the active site. Phe-66, Asn-68, and Asn-114 together coordinate tRNA.

The protein belongs to the PTH family. Monomer.

The protein resides in the cytoplasm. It catalyses the reaction an N-acyl-L-alpha-aminoacyl-tRNA + H2O = an N-acyl-L-amino acid + a tRNA + H(+). Its function is as follows. Hydrolyzes ribosome-free peptidyl-tRNAs (with 1 or more amino acids incorporated), which drop off the ribosome during protein synthesis, or as a result of ribosome stalling. Catalyzes the release of premature peptidyl moieties from peptidyl-tRNA molecules trapped in stalled 50S ribosomal subunits, and thus maintains levels of free tRNAs and 50S ribosomes. The protein is Peptidyl-tRNA hydrolase of Streptococcus pneumoniae (strain CGSP14).